A 482-amino-acid chain; its full sequence is UDP-sulfoquinovose synthase, chloroplastic (482 aa).

A chloroplast-targeting transit peptide spans 1 to 61 (MAHLLSTSCS…NNTQKLTVVR (61 aa)). NAD(+)-binding positions include 100–101 (YC), 120–124 (DNLVR), 163–164 (DI), R189, and N207. A substrate-binding site is contributed by R189. Residues T233 and Y270 each coordinate substrate. The active site involves T233. NAD(+)-binding residues include Y270 and K274. Catalysis depends on Y270, which acts as the Proton acceptor. K274 is a catalytic residue. Residue Q297 participates in substrate binding. V300 contacts NAD(+). Substrate contacts are provided by residues 327-330 (ALNR), 342-344 (TVY), and 415-417 (RVE).

The protein belongs to the NAD(P)-dependent epimerase/dehydratase family. Homodimer. Interacts with FdGOGAT (via FMN-binding domain). Requires NAD(+) as cofactor. In terms of processing, the N-terminus is blocked.

It is found in the plastid. It localises to the chloroplast stroma. The enzyme catalyses sulfite + UDP-alpha-D-glucose + H(+) = UDP-alpha-D-6-sulfoquinovose + H2O. Its function is as follows. Involved in the biosynthesis of sulfolipids found in thylakoid membranes. Converts UDP-glucose and sulfite to the sulfolipid head group precursor UDP-sulfoquinovose. The sulfite is delivered to the reaction center by the FMN-binding domain of FdGOGAT. The polypeptide is UDP-sulfoquinovose synthase, chloroplastic (SQD1) (Spinacia oleracea (Spinach)).